A 609-amino-acid polypeptide reads, in one-letter code: Tyrosine-protein kinase transforming protein Fes (609 aa).

2 disordered regions span residues 1–20 (AARA…PQGH) and 152–208 (RDSA…GGRT). Positions 8 to 174 (MGFSSELCSP…SKDKDRDKAK (167 aa)) constitute an F-BAR; degenerate domain. Basic and acidic residues-rich tracts occupy residues 160–175 (KYQE…KAKL) and 190–206 (QDDR…REGG). The SH2 domain maps to 247-336 (WYHGALPRAE…KSGIVLNRAV (90 aa)). The Protein kinase domain maps to 348 to 609 (LVLGEQIGRG…ELQSIRKRHR (262 aa)). ATP-binding positions include 354–362 (IGRGNFGEV) and Lys377. The active-site Proton acceptor is the Asp470. Tyr500 is subject to Phosphotyrosine; by autocatalysis.

Belongs to the protein kinase superfamily. Tyr protein kinase family. Fes/fps subfamily.

It catalyses the reaction L-tyrosyl-[protein] + ATP = O-phospho-L-tyrosyl-[protein] + ADP + H(+). In Felidae (cat family), this protein is Tyrosine-protein kinase transforming protein Fes (V-FES).